Consider the following 192-residue polypeptide: NF-kappa-B inhibitor-interacting Ras-like protein 1 (192 aa).

11–18 (GLLSVGKT) serves as a coordination point for GTP. The short motif at 35 to 43 (DCETLEDVY) is the Effector region element. An interactions with NFKBIA and NFKBIB region spans residues 58–93 (HLYDTRGLQKGVELPKHYFSFADGFVLVYSVNNLES). Residues 61–65 (DTRGL) and 120–123 (NKLD) contribute to the GTP site. A disordered region spans residues 168 to 192 (LSQPQSKSSFPLPGRKNKGNSNPEN).

It belongs to the small GTPase superfamily. Ras family. KappaB-Ras subfamily. Interacts with both NF-kappa-B inhibitor alpha (NFKBIA) and beta (NFKBIB) in vitro. However, it probably only interacts with NFKBIB in vivo. Forms a complex with NFKBIB and NF-kappa-B heterodimer (p50/NFKB1 and p65/RELA). Also interacts with c-Rel (REL).

The protein localises to the cytoplasm. Its function is as follows. Atypical Ras-like protein that acts as a potent regulator of NF-kappa-B activity by preventing the degradation of NF-kappa-B inhibitor beta (NFKBIB) by most signals, explaining why NFKBIB is more resistant to degradation. May act by blocking phosphorylation of NFKBIB and mediating cytoplasmic retention of p65/RELA NF-kappa-B subunit. It is unclear whether it acts as a GTPase. Both GTP- and GDP-bound forms block phosphorylation of NFKBIB. The chain is NF-kappa-B inhibitor-interacting Ras-like protein 1 (Nkiras1) from Mus musculus (Mouse).